Consider the following 66-residue polypeptide: Large ribosomal subunit protein bL35 (66 aa).

Positions 1–46 (MPKMKTHRASAKRFKRTGNGGLKRHHAFTGHRFHGKTKKQRRHLRK) are enriched in basic residues. The disordered stretch occupies residues 1 to 50 (MPKMKTHRASAKRFKRTGNGGLKRHHAFTGHRFHGKTKKQRRHLRKAAMV).

The protein belongs to the bacterial ribosomal protein bL35 family.

The polypeptide is Large ribosomal subunit protein bL35 (Lactobacillus delbrueckii subsp. bulgaricus (strain ATCC 11842 / DSM 20081 / BCRC 10696 / JCM 1002 / NBRC 13953 / NCIMB 11778 / NCTC 12712 / WDCM 00102 / Lb 14)).